Consider the following 362-residue polypeptide: Chorismate synthase (362 aa).

NADP(+) contacts are provided by Arg48 and Arg54. Residues 131–133 (RSS), 243–244 (NA), Gly287, 302–306 (KPTSS), and Arg328 each bind FMN.

This sequence belongs to the chorismate synthase family. As to quaternary structure, homotetramer. The cofactor is FMNH2.

It carries out the reaction 5-O-(1-carboxyvinyl)-3-phosphoshikimate = chorismate + phosphate. It participates in metabolic intermediate biosynthesis; chorismate biosynthesis; chorismate from D-erythrose 4-phosphate and phosphoenolpyruvate: step 7/7. Functionally, catalyzes the anti-1,4-elimination of the C-3 phosphate and the C-6 proR hydrogen from 5-enolpyruvylshikimate-3-phosphate (EPSP) to yield chorismate, which is the branch point compound that serves as the starting substrate for the three terminal pathways of aromatic amino acid biosynthesis. This reaction introduces a second double bond into the aromatic ring system. This is Chorismate synthase from Rhodopseudomonas palustris (strain TIE-1).